The sequence spans 220 residues: Octanoyltransferase (220 aa).

Positions 31 to 206 (DDTPDEVWLV…ELVTLLDYEQ (176 aa)) constitute a BPL/LPL catalytic domain. Residues 70-77 (RGGQVTYH), 137-139 (SLG), and 150-152 (GLA) each bind substrate. Cys-168 acts as the Acyl-thioester intermediate in catalysis.

This sequence belongs to the LipB family.

Its subcellular location is the cytoplasm. It catalyses the reaction octanoyl-[ACP] + L-lysyl-[protein] = N(6)-octanoyl-L-lysyl-[protein] + holo-[ACP] + H(+). Its pathway is protein modification; protein lipoylation via endogenous pathway; protein N(6)-(lipoyl)lysine from octanoyl-[acyl-carrier-protein]: step 1/2. Catalyzes the transfer of endogenously produced octanoic acid from octanoyl-acyl-carrier-protein onto the lipoyl domains of lipoate-dependent enzymes. Lipoyl-ACP can also act as a substrate although octanoyl-ACP is likely to be the physiological substrate. In Vibrio campbellii (strain ATCC BAA-1116), this protein is Octanoyltransferase.